A 207-amino-acid polypeptide reads, in one-letter code: Holliday junction branch migration complex subunit RuvA (207 aa).

The segment at 1–63 (MIGMLKGRVE…QDAITLFGFL (63 aa)) is domain I. The tract at residues 64-142 (DARSKRMFLQ…VDKIETGEPT (79 aa)) is domain II. The segment at 143–153 (STQRIPTDKGV) is flexible linker. A domain III region spans residues 153–207 (VEQVVEGLMSLGWKQADAQQAVDSVISSSGIALPLEEGNVPTVLRLALTSLDRGR).

Belongs to the RuvA family. As to quaternary structure, homotetramer. Forms an RuvA(8)-RuvB(12)-Holliday junction (HJ) complex. HJ DNA is sandwiched between 2 RuvA tetramers; dsDNA enters through RuvA and exits via RuvB. An RuvB hexamer assembles on each DNA strand where it exits the tetramer. Each RuvB hexamer is contacted by two RuvA subunits (via domain III) on 2 adjacent RuvB subunits; this complex drives branch migration. In the full resolvosome a probable DNA-RuvA(4)-RuvB(12)-RuvC(2) complex forms which resolves the HJ.

It is found in the cytoplasm. Functionally, the RuvA-RuvB-RuvC complex processes Holliday junction (HJ) DNA during genetic recombination and DNA repair, while the RuvA-RuvB complex plays an important role in the rescue of blocked DNA replication forks via replication fork reversal (RFR). RuvA specifically binds to HJ cruciform DNA, conferring on it an open structure. The RuvB hexamer acts as an ATP-dependent pump, pulling dsDNA into and through the RuvAB complex. HJ branch migration allows RuvC to scan DNA until it finds its consensus sequence, where it cleaves and resolves the cruciform DNA. This Bifidobacterium animalis subsp. lactis (strain AD011) protein is Holliday junction branch migration complex subunit RuvA.